A 261-amino-acid polypeptide reads, in one-letter code: Carnitinyl-CoA dehydratase (261 aa).

Glutamate 111 (nucleophile) is an active-site residue. The active-site Proton acceptor is the glutamate 131.

It belongs to the enoyl-CoA hydratase/isomerase family.

It carries out the reaction (R)-carnitinyl-CoA = crotonobetainyl-CoA + H2O. It participates in amine and polyamine metabolism; carnitine metabolism. Functionally, catalyzes the reversible dehydration of L-carnitinyl-CoA to crotonobetainyl-CoA. This is Carnitinyl-CoA dehydratase from Proteus mirabilis (strain HI4320).